The sequence spans 542 residues: MKFIFITGGVVSSLGKGITASSIGRLLKARGFKINMVKIDPYLQIDAGTMSPYEHGEVFVTDDGGETDLDLGNYERFVDIKLSANNNITTGKVYWSVLSKERRGDYLGKTVQVIPHITNEIKELIKSTGTNCDITIVEIGGTVGDIESLPFLEAIRQFKKDVGDNNVLYVHVSLLPYIKTAGEIKTKPTQHSVKELRGIGIQPNILVCRTEIPISEKTREKLALFCDVEKDAVIEAKDARTIYEVPLNLEREGIAKLIINKLKLNTNNSKPDLKEWRAMVDRIVNPLNEITIGIVGKYIMLKDAYTSITESLVHAGAKHDTKVNIEWISSEELRDETYKETMDKLVEDEKLDGILIPGGFGERGIDGKVNASKYARENNIPYLGICLGMQCAVIDFARNVCNLKGANSTEFDEGAPFPVIDYLPEQRDIEDKGGTMRLGEYKAILKEGSLAQKLYNEKEAFERHRHRYEVNPEYHDILTENGLIISGTSPDGKLAEFIELDTLTHPYFIATQAHPEFKSRPNKPHPLFDGLVKSALDKKLKK.

The amidoligase domain stretch occupies residues 1–264 (MKFIFITGGV…AKLIINKLKL (264 aa)). Ser-12 is a binding site for CTP. Ser-12 contacts UTP. Residue 13–18 (SLGKGI) participates in ATP binding. Tyr-53 serves as a coordination point for L-glutamine. An ATP-binding site is contributed by Asp-70. The Mg(2+) site is built by Asp-70 and Glu-138. Residues 145–147 (DIE), 185–190 (KTKPTQ), and Lys-221 each bind CTP. UTP contacts are provided by residues 185-190 (KTKPTQ) and Lys-221. 237 to 239 (KDA) contributes to the ATP binding site. Residues 298-541 (YIMLKDAYTS…VKSALDKKLK (244 aa)) enclose the Glutamine amidotransferase type-1 domain. Position 359 (Gly-359) interacts with L-glutamine. The Nucleophile; for glutamine hydrolysis role is filled by Cys-386. L-glutamine contacts are provided by residues 387–390 (LGMQ), Glu-410, and Arg-467. Residues His-514 and Glu-516 contribute to the active site.

It belongs to the CTP synthase family. Homotetramer.

It carries out the reaction UTP + L-glutamine + ATP + H2O = CTP + L-glutamate + ADP + phosphate + 2 H(+). It catalyses the reaction L-glutamine + H2O = L-glutamate + NH4(+). The enzyme catalyses UTP + NH4(+) + ATP = CTP + ADP + phosphate + 2 H(+). Its pathway is pyrimidine metabolism; CTP biosynthesis via de novo pathway; CTP from UDP: step 2/2. Its activity is regulated as follows. Allosterically activated by GTP, when glutamine is the substrate; GTP has no effect on the reaction when ammonia is the substrate. The allosteric effector GTP functions by stabilizing the protein conformation that binds the tetrahedral intermediate(s) formed during glutamine hydrolysis. Inhibited by the product CTP, via allosteric rather than competitive inhibition. Its function is as follows. Catalyzes the ATP-dependent amination of UTP to CTP with either L-glutamine or ammonia as the source of nitrogen. Regulates intracellular CTP levels through interactions with the four ribonucleotide triphosphates. This is CTP synthase from Methanococcus aeolicus (strain ATCC BAA-1280 / DSM 17508 / OCM 812 / Nankai-3).